A 252-amino-acid polypeptide reads, in one-letter code: DNA repair protein RecO (252 aa).

The protein belongs to the RecO family.

Involved in DNA repair and RecF pathway recombination. The protein is DNA repair protein RecO of Rhodospirillum rubrum (strain ATCC 11170 / ATH 1.1.1 / DSM 467 / LMG 4362 / NCIMB 8255 / S1).